The primary structure comprises 331 residues: Ferredoxin--NADP reductase (331 aa).

Positions 34, 42, 47, 87, 121, 285, and 325 each coordinate FAD.

The protein belongs to the ferredoxin--NADP reductase type 2 family. In terms of assembly, homodimer. FAD serves as cofactor.

It catalyses the reaction 2 reduced [2Fe-2S]-[ferredoxin] + NADP(+) + H(+) = 2 oxidized [2Fe-2S]-[ferredoxin] + NADPH. The chain is Ferredoxin--NADP reductase from Lactiplantibacillus plantarum (strain ATCC BAA-793 / NCIMB 8826 / WCFS1) (Lactobacillus plantarum).